We begin with the raw amino-acid sequence, 463 residues long: Chitobiosyldiphosphodolichol beta-mannosyltransferase (463 aa).

Over 1–3 (MKA) the chain is Lumenal. A helical membrane pass occupies residues 4-24 (WHWSVTLVVIYLAIPVILYLL). Residues 25–105 (TRKDDRKPLS…PLILNTRKLP (81 aa)) lie on the Cytoplasmic side of the membrane. Residues 106-126 (FVVFGILKVIRQHWLLISLLY) constitute an intramembrane region (helical). Over 127–463 (KLRGADYLLV…FSSSSSDDDH (337 aa)) the chain is Lumenal.

It belongs to the glycosyltransferase group 1 family.

It localises to the endoplasmic reticulum membrane. The catalysed reaction is an N,N'-diacetylchitobiosyl-diphospho-di-trans,poly-cis-dolichol + GDP-alpha-D-mannose = a beta-D-Man-(1-&gt;4)-beta-D-GlcNAc-(1-&gt;4)-alpha-D-GlcNAc-diphospho-di-trans,poly-cis-dolichol + GDP + H(+). The protein operates within protein modification; protein glycosylation. Functionally, participates in the formation of the lipid-linked precursor oligosaccharide for N-glycosylation. Involved in assembling the dolichol-pyrophosphate-GlcNAc(2)-Man(5) intermediate on the cytoplasmic surface of the ER. This chain is Chitobiosyldiphosphodolichol beta-mannosyltransferase (ALG1), found in Yarrowia lipolytica (strain CLIB 122 / E 150) (Yeast).